Here is a 184-residue protein sequence, read N- to C-terminus: MKTLTDSFVYLGHWPSAGSFGFNTDILATNPINLSVVFGVLIFFGKGVLNDLLDNRKQRILNTIRNSEELREGAIQQLENALARLRKVETEADQFRVNGYSEIEREKLNLINSTYKTLKQLENYKNETILFEQQRTINQVRERVFQQALQGAIGTLNSCLSNELHLRTINANIGMFGTMKEITD.

Residues 27 to 49 (LATNPINLSVVFGVLIFFGKGVL) form a helical membrane-spanning segment.

The protein belongs to the ATPase B chain family. F-type ATPases have 2 components, F(1) - the catalytic core - and F(0) - the membrane proton channel. F(1) has five subunits: alpha(3), beta(3), gamma(1), delta(1), epsilon(1). F(0) has four main subunits: a(1), b(1), b'(1) and c(10-14). The alpha and beta chains form an alternating ring which encloses part of the gamma chain. F(1) is attached to F(0) by a central stalk formed by the gamma and epsilon chains, while a peripheral stalk is formed by the delta, b and b' chains.

It localises to the plastid. It is found in the chloroplast thylakoid membrane. Functionally, f(1)F(0) ATP synthase produces ATP from ADP in the presence of a proton or sodium gradient. F-type ATPases consist of two structural domains, F(1) containing the extramembraneous catalytic core and F(0) containing the membrane proton channel, linked together by a central stalk and a peripheral stalk. During catalysis, ATP synthesis in the catalytic domain of F(1) is coupled via a rotary mechanism of the central stalk subunits to proton translocation. In terms of biological role, component of the F(0) channel, it forms part of the peripheral stalk, linking F(1) to F(0). The sequence is that of ATP synthase subunit b, chloroplastic from Olimarabidopsis pumila (Dwarf rocket).